Consider the following 488-residue polypeptide: LPTEDDMGNSEVGHNALGAGRIFAQGAKLVDSALETGKLYEGEGFKYIKESFPTNTLHLIGLLSDGGVHSRLDQLLLLVKGASERGAKRIRVHILTDGRDVLDGSSVGFAETLENYLAQLREKGVDAQIASGGGRMYVTMDRYENDWGVVKRGWDAQVLGEAPHKFKNAVEAIKTLRQEPNTSDQYLPPFVIVDENGKPVGPIVDGDAVVTFNFRADRMVMIAKALEYADFDKFDRVRFPKIRYAGMLQYDGELKLPSKYLVEPPEIDRTSGEYLTYNGVRTFACSETVKFGHVTFFWNGNRSGYFNPQMEEYVEIPSDSGITFNVQPKMKAVEIAEKGRGAILSKKFEQVRVNLPNSDMVGHTSSIEATVVACKAADEAVKIIIDAIEQVGGIYVVTADHGNAEDMVKRNKKGQPLLDKNGNIQILTSHTLQPVPIAIGGPGLAPGVQFRKDVPNGGLANVAATVMNLHGFEAPADYETTLIEVVDN.

The active-site Phosphoserine intermediate is the S10. S10 lines the Mn(2+) pocket. Substrate-binding positions include H69, 99-100 (RD), R135, R142, 215-218 (RADR), and K290. Mn(2+) contacts are provided by D359, H363, D400, H401, and H430.

Belongs to the BPG-independent phosphoglycerate mutase family. As to quaternary structure, monomer. Mn(2+) serves as cofactor.

The protein resides in the cytoplasm. The enzyme catalyses (2R)-2-phosphoglycerate = (2R)-3-phosphoglycerate. It participates in carbohydrate degradation; glycolysis; pyruvate from D-glyceraldehyde 3-phosphate: step 3/5. Functionally, catalyzes the interconversion of 2-phosphoglycerate and 3-phosphoglycerate. The polypeptide is 2,3-bisphosphoglycerate-independent phosphoglycerate mutase (Prunus dulcis (Almond)).